Reading from the N-terminus, the 429-residue chain is Histidine--tRNA ligase (429 aa).

Belongs to the class-II aminoacyl-tRNA synthetase family. In terms of assembly, homodimer.

The protein localises to the cytoplasm. It catalyses the reaction tRNA(His) + L-histidine + ATP = L-histidyl-tRNA(His) + AMP + diphosphate + H(+). The protein is Histidine--tRNA ligase of Stutzerimonas stutzeri (strain A1501) (Pseudomonas stutzeri).